Reading from the N-terminus, the 268-residue chain is Phosphate import ATP-binding protein PstB (268 aa).

Positions 22–263 (LAVRNLNFYY…PKQQQTQDYI (242 aa)) constitute an ABC transporter domain. 54–61 (GPSGCGKS) serves as a coordination point for ATP.

This sequence belongs to the ABC transporter superfamily. Phosphate importer (TC 3.A.1.7) family. In terms of assembly, the complex is composed of two ATP-binding proteins (PstB), two transmembrane proteins (PstC and PstA) and a solute-binding protein (PstS).

It is found in the cell inner membrane. The catalysed reaction is phosphate(out) + ATP + H2O = ADP + 2 phosphate(in) + H(+). Its function is as follows. Part of the ABC transporter complex PstSACB involved in phosphate import. Responsible for energy coupling to the transport system. The sequence is that of Phosphate import ATP-binding protein PstB from Gluconobacter oxydans (strain 621H) (Gluconobacter suboxydans).